A 544-amino-acid chain; its full sequence is NAD(P)H-quinone oxidoreductase chain 4 (544 aa).

Helical transmembrane passes span 29-49 (FPWL…IPLV), 60-80 (WYAL…YLNG), 115-135 (LILL…PVTF), 139-159 (LFFF…AVQD), 161-181 (LLFF…LAIW), 193-213 (FILY…AMAF), 234-254 (GFQA…LPIV), 268-288 (TAPV…YALF), 302-322 (FAPL…LTSF), 339-359 (MGFV…GAML), 360-380 (QMIS…ATYD), 400-422 (MFAM…GFVS), 442-462 (IVID…LLSM), and 488-508 (IYII…PKLV).

It belongs to the complex I subunit 4 family.

It is found in the cellular thylakoid membrane. The catalysed reaction is a plastoquinone + NADH + (n+1) H(+)(in) = a plastoquinol + NAD(+) + n H(+)(out). It catalyses the reaction a plastoquinone + NADPH + (n+1) H(+)(in) = a plastoquinol + NADP(+) + n H(+)(out). Its function is as follows. NDH-1 shuttles electrons from NAD(P)H, via FMN and iron-sulfur (Fe-S) centers, to quinones in the respiratory chain. The immediate electron acceptor for the enzyme in this species is believed to be plastoquinone. Couples the redox reaction to proton translocation (for every two electrons transferred, four hydrogen ions are translocated across the cytoplasmic membrane), and thus conserves the redox energy in a proton gradient. This Synechococcus sp. (strain RCC307) protein is NAD(P)H-quinone oxidoreductase chain 4.